Consider the following 245-residue polypeptide: 1-(5-phosphoribosyl)-5-[(5-phosphoribosylamino)methylideneamino] imidazole-4-carboxamide isomerase (245 aa).

Residue aspartate 8 is the Proton acceptor of the active site. Residue aspartate 130 is the Proton donor of the active site.

It belongs to the HisA/HisF family.

The protein localises to the cytoplasm. It catalyses the reaction 1-(5-phospho-beta-D-ribosyl)-5-[(5-phospho-beta-D-ribosylamino)methylideneamino]imidazole-4-carboxamide = 5-[(5-phospho-1-deoxy-D-ribulos-1-ylimino)methylamino]-1-(5-phospho-beta-D-ribosyl)imidazole-4-carboxamide. The protein operates within amino-acid biosynthesis; L-histidine biosynthesis; L-histidine from 5-phospho-alpha-D-ribose 1-diphosphate: step 4/9. The protein is 1-(5-phosphoribosyl)-5-[(5-phosphoribosylamino)methylideneamino] imidazole-4-carboxamide isomerase of Pseudomonas savastanoi pv. phaseolicola (strain 1448A / Race 6) (Pseudomonas syringae pv. phaseolicola (strain 1448A / Race 6)).